Here is a 63-residue protein sequence, read N- to C-terminus: Large ribosomal subunit protein bL28 (63 aa).

Belongs to the bacterial ribosomal protein bL28 family.

The protein is Large ribosomal subunit protein bL28 of Acidobacterium capsulatum (strain ATCC 51196 / DSM 11244 / BCRC 80197 / JCM 7670 / NBRC 15755 / NCIMB 13165 / 161).